The sequence spans 521 residues: Proactivator polypeptide-like 1 (521 aa).

The first 17 residues, 1–17 (MLCALLLLPSLLGATRA), serve as a signal peptide directing secretion. A propeptide spanning residues 18-59 (SPTSGPQECAKGSTVWCQDLQTAARCGAVGYCQGAVWNKPTA) is cleaved from the precursor. One can recognise a Saposin A-type 1 domain in the interval 19–59 (PTSGPQECAKGSTVWCQDLQTAARCGAVGYCQGAVWNKPTA). 2 Saposin B-type domains span residues 60–144 (KSLP…EPLQ) and 180–258 (EGAL…EELG). Cystine bridges form between C64–C140, C67–C134, and C95–C107. Residues 146–180 (HLATLRPLSKEDTFEAVAPFMANGPLTFHPRQAPE) constitute a propeptide that is removed on maturation. 3 disulfides stabilise this stretch: C184–C254, C187–C248, and C213–C224. Residue N201 is glycosylated (N-linked (GlcNAc...) asparagine). Positions 259–288 (APARLTQVVAMDGVPSLELGLPRKQSEMQM) are excised as a propeptide. Saposin B-type domains lie at 290–370 (AGVT…GNRR) and 392–473 (QGSF…HGPR). Cystine bridges form between C294–C366, C297–C360, and C325–C336. N-linked (GlcNAc...) asparagine glycosylation occurs at N311. The propeptide occupies 370–391 (RRARAVHDAYAIVPSPEWDAEN). Cystine bridges form between C396/C469, C399/C463, and C427/C438. Positions 474–521 (TPLLGTDQCALGPSFWCRSQEAAKLCNAVQHCQKHVWKEMHLHAGEHA) are excised as a propeptide. Residues 475-515 (PLLGTDQCALGPSFWCRSQEAAKLCNAVQHCQKHVWKEMHL) form the Saposin A-type 2 domain.

The protein resides in the secreted. Its function is as follows. May activate the lysosomal degradation of sphingolipids. The sequence is that of Proactivator polypeptide-like 1 (PSAPL1) from Homo sapiens (Human).